The primary structure comprises 214 residues: MSGRFISFEGPDGAGKTSVLTAIRTGLVNQLGDQVVYTREPGGNPIAEQVRAVLLDKQNGAMDDWTEALLYAASRRQHVVETLKPALEAGKLILCDRYLDSSIAYQGGGRELGIDRIWELNQYAIDGLLPDLTIFLDLPVETGLARIEKGRAETINRLDEQTTNFHRRVRQAYLTLAERFPERIVKVNADQELARVIEDVRSAIHARYADLFTN.

10–17 (GPDGAGKT) contributes to the ATP binding site.

The protein belongs to the thymidylate kinase family.

The enzyme catalyses dTMP + ATP = dTDP + ADP. Its function is as follows. Phosphorylation of dTMP to form dTDP in both de novo and salvage pathways of dTTP synthesis. The protein is Thymidylate kinase of Limosilactobacillus fermentum (strain NBRC 3956 / LMG 18251) (Lactobacillus fermentum).